The primary structure comprises 150 residues: MSEDLTFEERYQKDIRRRESFFSDFHLTDYSNYLGMKDTDELQTKGYVVYIADGYITEYILRYFDKQYAVIDDYLYYVLIVKFMGGFKVFIYEYSYGKLLESDLSDYSIFEKSIADINSLISSCYHIALSLSHTFFNITEYYTKYISNFK.

This is an uncharacterized protein from Acidianus filamentous virus 1 (isolate United States/Yellowstone) (AFV-1).